A 127-amino-acid chain; its full sequence is Fumarate reductase subunit C (127 aa).

The next 3 helical transmembrane spans lie at 30-50 (ATVL…GSLV), 58-78 (GWLS…ALLG), and 107-127 (IIVL…LMVV).

This sequence belongs to the FrdC family. In terms of assembly, part of an enzyme complex containing four subunits: a flavoprotein (FrdA), an iron-sulfur protein (FrdB), and two hydrophobic anchor proteins (FrdC and FrdD).

It is found in the cell inner membrane. Anchors the catalytic components of the fumarate reductase complex to the cell membrane, binds quinones. The protein is Fumarate reductase subunit C of Vibrio atlanticus (strain LGP32) (Vibrio splendidus (strain Mel32)).